Here is a 335-residue protein sequence, read N- to C-terminus: Pharynx and intestine in excess protein 1 (335 aa).

K68 participates in a covalent cross-link: Glycyl lysine isopeptide (Lys-Gly) (interchain with G-Cter in SUMO). The segment at 98-126 adopts a C3H1-type 1 zinc-finger fold; the sequence is EYKTRLCDAFRREGYCPYNDNCTYAHGQD. Basic and acidic residues predominate over residues 130–156; the sequence is VPRRRQEYYSRDPPRERRDSRSRRDDV. Residues 130–188 form a disordered region; sequence VPRRRQEYYSRDPPRERRDSRSRRDDVDTTINRSSSSASKHHDENRRPSNNHGSSNRRQ. Composition is skewed to polar residues over residues 158–167 and 177–187; these read TTINRSSSSA and PSNNHGSSNRR. The C3H1-type 2 zinc finger occupies 184 to 211; the sequence is SNRRQICHNFERGNCRYGPRCRFIHVEQ. The required for inhibition of Ser-2 phosphorylation stretch occupies residues 288 to 291; sequence MAPT.

Interacts with hda-1, let-418 and mep-1. Interacts (via C terminus) with cit-1.1 (via C terminus). Post-translationally, sumoylated in adult germ cells.

It is found in the nucleus. The protein resides in the cytoplasm. Its subcellular location is the cytoskeleton. It localises to the microtubule organizing center. The protein localises to the centrosome. It is found in the spindle. The protein resides in the cytoplasmic granule. Functionally, maternally provided pie-1 is required for germline cell fate determination. Functions as a repressor of RNA polymerase II-dependent gene expression in the developing germline. Required for expression of nos-2 in P4 germline blastomere cells. Inhibits the histone deacetylase activity of hda-1. Represses transcriptional activation of cdk-9 and cit-1.1, which are members of the P-TEFb complex. Acts redundantly with gei-17 to promote piRNA-mediated silencing and fertility in adult germline. Promotes the sumoylation of hda-1 in adult animals but not in embryos thereby regulating its interaction with mep-1. The polypeptide is Pharynx and intestine in excess protein 1 (Caenorhabditis elegans).